The primary structure comprises 160 residues: MHILKKPDFSDPKLRAKLAKGMGHNYYGEPAWPNDLLYIFPVVILGTFACLVGLAVLDPAMLGDKADPFATPLEILPEWYLYPVFQILRVVPNKLLGIVLQTLVPLGLMLIPFIENVNKYQNPFRRPIAMAFFLFGTMITIYLGIGACLPIDKSLTLGLF.

A run of 3 helical transmembrane segments spans residues 36 to 56 (LLYI…GLAV), 95 to 115 (LLGI…PFIE), and 128 to 148 (IAMA…IGAC).

This sequence belongs to the cytochrome b family. PetD subfamily. As to quaternary structure, the 4 large subunits of the cytochrome b6-f complex are cytochrome b6, subunit IV (17 kDa polypeptide, PetD), cytochrome f and the Rieske protein, while the 4 small subunits are PetG, PetL, PetM and PetN. The complex functions as a dimer.

The protein localises to the cellular thylakoid membrane. Functionally, component of the cytochrome b6-f complex, which mediates electron transfer between photosystem II (PSII) and photosystem I (PSI), cyclic electron flow around PSI, and state transitions. In Prochlorococcus marinus (strain MIT 9303), this protein is Cytochrome b6-f complex subunit 4.